Consider the following 192-residue polypeptide: Pyridoxal 5'-phosphate synthase subunit PdxT (192 aa).

L-glutamine is bound at residue 53 to 55 (GES). The active-site Nucleophile is the cysteine 82. Residues arginine 108 and 134–135 (IR) contribute to the L-glutamine site. Catalysis depends on charge relay system residues histidine 170 and glutamate 172.

Belongs to the glutaminase PdxT/SNO family. In the presence of PdxS, forms a dodecamer of heterodimers. Only shows activity in the heterodimer.

It catalyses the reaction aldehydo-D-ribose 5-phosphate + D-glyceraldehyde 3-phosphate + L-glutamine = pyridoxal 5'-phosphate + L-glutamate + phosphate + 3 H2O + H(+). The enzyme catalyses L-glutamine + H2O = L-glutamate + NH4(+). It functions in the pathway cofactor biosynthesis; pyridoxal 5'-phosphate biosynthesis. Its function is as follows. Catalyzes the hydrolysis of glutamine to glutamate and ammonia as part of the biosynthesis of pyridoxal 5'-phosphate. The resulting ammonia molecule is channeled to the active site of PdxS. This is Pyridoxal 5'-phosphate synthase subunit PdxT from Methanothermobacter thermautotrophicus (strain ATCC 29096 / DSM 1053 / JCM 10044 / NBRC 100330 / Delta H) (Methanobacterium thermoautotrophicum).